The sequence spans 464 residues: L-cystine uptake protein TcyP (464 aa).

10 helical membrane passes run 3–23 (TLLV…LYYM), 34–54 (VFTA…IYEP), 73–93 (YVKL…ISAF), 107–127 (GLII…GIAA), 184–204 (PTST…FIGV), 225–245 (IVMR…LALM), 263–283 (FVLA…LLIA), 347–367 (AGIY…IDPL), 371–391 (FILT…GVGG), and 395–415 (FAAL…ALVI).

This sequence belongs to the dicarboxylate/amino acid:cation symporter (DAACS) (TC 2.A.23) family.

The protein localises to the membrane. Its function is as follows. Mediates uptake of L-cystine, the oxidized form of L-cysteine. The protein is L-cystine uptake protein TcyP of Bacillus thuringiensis subsp. konkukian (strain 97-27).